We begin with the raw amino-acid sequence, 79 residues long: Small ribosomal subunit protein bS20 (79 aa).

It belongs to the bacterial ribosomal protein bS20 family.

Functionally, binds directly to 16S ribosomal RNA. The polypeptide is Small ribosomal subunit protein bS20 (Karelsulcia muelleri (strain GWSS) (Sulcia muelleri)).